Reading from the N-terminus, the 329-residue chain is Fructose-1,6-bisphosphatase class 1 (329 aa).

Mg(2+)-binding residues include E84, D103, L105, and D106. Substrate contacts are provided by residues 106–109, N196, and K262; that span reads DGSS. Residue E268 coordinates Mg(2+).

The protein belongs to the FBPase class 1 family. Homotetramer. Mg(2+) serves as cofactor.

It localises to the cytoplasm. It catalyses the reaction beta-D-fructose 1,6-bisphosphate + H2O = beta-D-fructose 6-phosphate + phosphate. It functions in the pathway carbohydrate biosynthesis; gluconeogenesis. The protein is Fructose-1,6-bisphosphatase class 1 of Shewanella sediminis (strain HAW-EB3).